A 584-amino-acid polypeptide reads, in one-letter code: Cytosolic Fe-S cluster assembly factor NAR1 (584 aa).

8 residues coordinate [4Fe-4S] cluster: Cys20, Cys81, Cys84, Cys87, Cys190, Cys245, Cys465, and Cys469.

The protein belongs to the NARF family.

Component of the cytosolic Fe/S protein assembly machinery. Required for maturation of extramitochondrial Fe/S proteins. May play a role in the transfer of pre-assembled Fe/S clusters to target apoproteins. In Candida dubliniensis (strain CD36 / ATCC MYA-646 / CBS 7987 / NCPF 3949 / NRRL Y-17841) (Yeast), this protein is Cytosolic Fe-S cluster assembly factor NAR1 (NAR1).